The sequence spans 92 residues: Acylphosphatase (92 aa).

The Acylphosphatase-like domain occupies 5 to 92 (CIAAYVYGVV…ADFQGFSIRY (88 aa)). Catalysis depends on residues arginine 20 and asparagine 38.

The protein belongs to the acylphosphatase family.

The catalysed reaction is an acyl phosphate + H2O = a carboxylate + phosphate + H(+). The sequence is that of Acylphosphatase (acyP) from Serratia proteamaculans (strain 568).